A 254-amino-acid polypeptide reads, in one-letter code: Small ribosomal subunit protein eS1 (254 aa).

N-acetylalanine; partial is present on Ala2.

This sequence belongs to the eukaryotic ribosomal protein eS1 family. Component of the small ribosomal subunit. Mature ribosomes consist of a small (40S) and a large (60S) subunit. The 40S subunit contains about 33 different proteins and 1 molecule of RNA (18S). The 60S subunit contains about 49 different proteins and 3 molecules of RNA (25S, 5.8S and 5S).

It is found in the cytoplasm. This Zygosaccharomyces rouxii (strain ATCC 2623 / CBS 732 / NBRC 1130 / NCYC 568 / NRRL Y-229) protein is Small ribosomal subunit protein eS1.